The sequence spans 117 residues: Non-specific lipid-transfer protein B (117 aa).

An N-terminal signal peptide occupies residues 1-25 (MAGLVKLSCLVLACMIVAGPIATNA). 4 cysteine pairs are disulfide-bonded: Cys-29-Cys-76, Cys-39-Cys-53, Cys-54-Cys-99, and Cys-74-Cys-113.

The protein belongs to the plant LTP family.

Functionally, plant non-specific lipid-transfer proteins transfer phospholipids as well as galactolipids across membranes. May play a role in wax or cutin deposition in the cell walls of expanding epidermal cells and certain secretory tissues. The polypeptide is Non-specific lipid-transfer protein B (WAX9B) (Brassica oleracea var. italica (Broccoli)).